A 618-amino-acid polypeptide reads, in one-letter code: NAD(P)H-quinone oxidoreductase subunit 5, organellar chromatophore 2 (618 aa).

17 helical membrane-spanning segments follow: residues 16-36 (LIPI…TGWI), 43-63 (TPAY…SLAL), 99-119 (LAAL…ALGY), 129-149 (FFAL…SDSL), 152-172 (SYFL…FWYA), 190-210 (GDVM…GMEF), 220-240 (NTLT…GPIG), 267-287 (SVVV…LHHS), 291-311 (IAVL…VSIA), 318-335 (TLSY…IAIA), 348-368 (AHAI…AVSN), 390-410 (LIAG…CFGL), 419-438 (APWF…LNLT), 461-481 (WQMA…PWMM), 495-515 (AITG…GAIV), 553-573 (IVSG…NGFV), and 597-617 (SYIL…SWLV).

The protein belongs to the complex I subunit 5 family. NDH is composed of at least 16 different subunits, 5 of which are encoded in the nucleus.

It is found in the plastid. It localises to the organellar chromatophore thylakoid membrane. The catalysed reaction is a plastoquinone + NADH + (n+1) H(+)(in) = a plastoquinol + NAD(+) + n H(+)(out). It carries out the reaction a plastoquinone + NADPH + (n+1) H(+)(in) = a plastoquinol + NADP(+) + n H(+)(out). NDH shuttles electrons from NAD(P)H:plastoquinone, via FMN and iron-sulfur (Fe-S) centers, to quinones in the photosynthetic chain and possibly in a chloroplast respiratory chain. The immediate electron acceptor for the enzyme in this species is believed to be plastoquinone. Couples the redox reaction to proton translocation, and thus conserves the redox energy in a proton gradient. This Paulinella chromatophora protein is NAD(P)H-quinone oxidoreductase subunit 5, organellar chromatophore 2 (ndhF2).